The chain runs to 690 residues: UvrABC system protein B (690 aa).

The Helicase ATP-binding domain occupies glutamate 39–glutamate 422. An ATP-binding site is contributed by glycine 52–threonine 59. Positions tyrosine 105–isoleucine 128 match the Beta-hairpin motif. The Helicase C-terminal domain occupies glutamine 443–isoleucine 596. Residues alanine 640–arginine 675 enclose the UVR domain.

Belongs to the UvrB family. In terms of assembly, forms a heterotetramer with UvrA during the search for lesions. Interacts with UvrC in an incision complex.

The protein localises to the cytoplasm. Its function is as follows. The UvrABC repair system catalyzes the recognition and processing of DNA lesions. A damage recognition complex composed of 2 UvrA and 2 UvrB subunits scans DNA for abnormalities. Upon binding of the UvrA(2)B(2) complex to a putative damaged site, the DNA wraps around one UvrB monomer. DNA wrap is dependent on ATP binding by UvrB and probably causes local melting of the DNA helix, facilitating insertion of UvrB beta-hairpin between the DNA strands. Then UvrB probes one DNA strand for the presence of a lesion. If a lesion is found the UvrA subunits dissociate and the UvrB-DNA preincision complex is formed. This complex is subsequently bound by UvrC and the second UvrB is released. If no lesion is found, the DNA wraps around the other UvrB subunit that will check the other stand for damage. The polypeptide is UvrABC system protein B (Dechloromonas aromatica (strain RCB)).